The sequence spans 561 residues: Putative transport protein YbjL (561 aa).

The next 5 helical transmembrane spans lie at 8 to 28 (LLNG…LCLG), 32 to 52 (LGSV…LLGQ), 66 to 86 (FMLF…SIFF), 94 to 114 (MLAL…GKLF), and 158 to 178 (NLSL…IVGA). RCK C-terminal domains are found at residues 200-288 (RGLD…SLRN) and 292-373 (VFDR…RIGF). 5 helical membrane passes run 383–403 (LLAF…TFQF), 406–426 (FSFG…LGFL), 447–467 (FGLM…ISNG), 475–495 (MLIA…LFGA), and 540–560 (AIAN…WPGL).

Belongs to the AAE transporter (TC 2.A.81) family. YbjL subfamily.

The protein resides in the cell membrane. The chain is Putative transport protein YbjL from Salmonella gallinarum (strain 287/91 / NCTC 13346).